Consider the following 297-residue polypeptide: Protoheme IX farnesyltransferase (297 aa).

9 helical membrane-spanning segments follow: residues 12 to 32 (PGII…AAKG), 36 to 56 (YALF…GCVF), 85 to 105 (VSLV…YLAA), 108 to 128 (LAMW…SLYM), 133 to 153 (VYGT…GYCA), 163 to 183 (LILL…IAIF), 209 to 229 (ITLY…SGYA), 230 to 250 (GYKY…MALQ), and 266 to 286 (FIFS…DFMV).

This sequence belongs to the UbiA prenyltransferase family. Protoheme IX farnesyltransferase subfamily.

Its subcellular location is the cell inner membrane. It carries out the reaction heme b + (2E,6E)-farnesyl diphosphate + H2O = Fe(II)-heme o + diphosphate. It functions in the pathway porphyrin-containing compound metabolism; heme O biosynthesis; heme O from protoheme: step 1/1. Converts heme B (protoheme IX) to heme O by substitution of the vinyl group on carbon 2 of heme B porphyrin ring with a hydroxyethyl farnesyl side group. The polypeptide is Protoheme IX farnesyltransferase (Sodalis glossinidius (strain morsitans)).